The chain runs to 389 residues: Leucine aminopeptidase 1 (389 aa).

A signal peptide spans 1–19; that stretch reads MKLPALLTLGVAASTMVLA. A propeptide spanning residues 20 to 88 is cleaved from the precursor; sequence AIAPDQVPLN…LPKVFPTPAV (69 aa). N-linked (GlcNAc...) asparagine glycans are attached at residues asparagine 96, asparagine 119, asparagine 149, asparagine 164, and asparagine 181. Positions 189 and 208 each coordinate Zn(2+). The N-linked (GlcNAc...) asparagine glycan is linked to asparagine 233. 2 residues coordinate Zn(2+): glutamate 247 and aspartate 274. An intrachain disulfide couples cysteine 323 to cysteine 327. Histidine 356 contacts Zn(2+).

The protein belongs to the peptidase M28 family. M28E subfamily. In terms of assembly, monomer. Zn(2+) is required as a cofactor.

The protein resides in the secreted. Extracellular aminopeptidase that allows assimilation of proteinaceous substrates. In Paracoccidioides brasiliensis (strain Pb18), this protein is Leucine aminopeptidase 1 (LAP1).